Here is a 537-residue protein sequence, read N- to C-terminus: Phosphoenolpyruvate carboxykinase (ATP) (537 aa).

Substrate-binding residues include Arg-61, Tyr-195, and Lys-201. Residues Lys-201, His-220, and 236–244 each bind ATP; that span reads GLSGTGKTT. Lys-201 and His-220 together coordinate Mn(2+). Asp-257 contacts Mn(2+). Glu-285, Arg-323, and Thr-448 together coordinate ATP. Position 323 (Arg-323) interacts with substrate.

The protein belongs to the phosphoenolpyruvate carboxykinase (ATP) family. The cofactor is Mn(2+).

It localises to the cytoplasm. It catalyses the reaction oxaloacetate + ATP = phosphoenolpyruvate + ADP + CO2. Its pathway is carbohydrate biosynthesis; gluconeogenesis. In terms of biological role, involved in the gluconeogenesis. Catalyzes the conversion of oxaloacetate (OAA) to phosphoenolpyruvate (PEP) through direct phosphoryl transfer between the nucleoside triphosphate and OAA. The sequence is that of Phosphoenolpyruvate carboxykinase (ATP) from Rhodopseudomonas palustris (strain HaA2).